Reading from the N-terminus, the 375-residue chain is 23S rRNA (uracil(747)-C(5))-methyltransferase RlmC (375 aa).

Positions 3, 11, 14, and 87 each coordinate [4Fe-4S] cluster. S-adenosyl-L-methionine contacts are provided by Gln212, Phe241, Glu262, and Asn307. Catalysis depends on Cys334, which acts as the Nucleophile.

The protein belongs to the class I-like SAM-binding methyltransferase superfamily. RNA M5U methyltransferase family. RlmC subfamily.

It catalyses the reaction uridine(747) in 23S rRNA + S-adenosyl-L-methionine = 5-methyluridine(747) in 23S rRNA + S-adenosyl-L-homocysteine + H(+). Catalyzes the formation of 5-methyl-uridine at position 747 (m5U747) in 23S rRNA. The chain is 23S rRNA (uracil(747)-C(5))-methyltransferase RlmC from Salmonella arizonae (strain ATCC BAA-731 / CDC346-86 / RSK2980).